The sequence spans 273 residues: WIMGHMVNAIGQIDEFVNLGANSIETDVSFDDSANPQYTYHGVPCDCGRSCLKWENYNDFLKGLRSATTPGNSKYQSKLVLVVFDLKTGSLYDNQANEAGKKLAKNLLQHYWNNGNNGGRAYIVLSIPDLNHYPLIKGFTDTLTQEGHPELLDEVGYDFSGNDAIGDVANAYKKAGVTGHVWQSDGITNCLLRGLTRVREAVANRDSGKGYINKVYYWTVDKRASTRDALDAGVDGVMTNYPDVITDVMNEAAYKNKFRLATYEDNPWETFKK.

His5 is an active-site residue. Mg(2+)-binding residues include Glu25 and Asp27. The active-site Nucleophile is the His41. Cystine bridges form between Cys45–Cys51 and Cys47–Cys190. Asp85 provides a ligand contact to Mg(2+).

It belongs to the arthropod phospholipase D family. Class II subfamily. Mg(2+) is required as a cofactor. Expressed by the venom gland.

It is found in the secreted. The catalysed reaction is an N-(acyl)-sphingosylphosphocholine = an N-(acyl)-sphingosyl-1,3-cyclic phosphate + choline. The enzyme catalyses an N-(acyl)-sphingosylphosphoethanolamine = an N-(acyl)-sphingosyl-1,3-cyclic phosphate + ethanolamine. It catalyses the reaction a 1-acyl-sn-glycero-3-phosphocholine = a 1-acyl-sn-glycero-2,3-cyclic phosphate + choline. It carries out the reaction a 1-acyl-sn-glycero-3-phosphoethanolamine = a 1-acyl-sn-glycero-2,3-cyclic phosphate + ethanolamine. Dermonecrotic toxins cleave the phosphodiester linkage between the phosphate and headgroup of certain phospholipids (sphingolipid and lysolipid substrates), forming an alcohol (often choline) and a cyclic phosphate. This toxin acts on sphingomyelin (SM). It may also act on ceramide phosphoethanolamine (CPE), lysophosphatidylcholine (LPC) and lysophosphatidylethanolamine (LPE), but not on lysophosphatidylserine (LPS), and lysophosphatidylglycerol (LPG). It acts by transphosphatidylation, releasing exclusively cyclic phosphate products as second products. Induces dermonecrosis, hemolysis, increased vascular permeability, edema, inflammatory response, and platelet aggregation. The polypeptide is Dermonecrotic toxin LspaSicTox-alphaIA2iv (Loxosceles spadicea (Recluse spider)).